Reading from the N-terminus, the 134-residue chain is NADPH-dependent 7-cyano-7-deazaguanine reductase (134 aa).

The active-site Thioimide intermediate is the Cys-48. The active-site Proton donor is Asp-55. Residues 70–72 and 89–90 each bind substrate; these read VEL and QE.

It belongs to the GTP cyclohydrolase I family. QueF type 1 subfamily.

The protein localises to the cytoplasm. The catalysed reaction is 7-aminomethyl-7-carbaguanine + 2 NADP(+) = 7-cyano-7-deazaguanine + 2 NADPH + 3 H(+). Its pathway is tRNA modification; tRNA-queuosine biosynthesis. Functionally, catalyzes the NADPH-dependent reduction of 7-cyano-7-deazaguanine (preQ0) to 7-aminomethyl-7-deazaguanine (preQ1). The chain is NADPH-dependent 7-cyano-7-deazaguanine reductase from Caldanaerobacter subterraneus subsp. tengcongensis (strain DSM 15242 / JCM 11007 / NBRC 100824 / MB4) (Thermoanaerobacter tengcongensis).